We begin with the raw amino-acid sequence, 197 residues long: Large ribosomal subunit protein bL25 (197 aa).

It belongs to the bacterial ribosomal protein bL25 family. CTC subfamily. In terms of assembly, part of the 50S ribosomal subunit; part of the 5S rRNA/L5/L18/L25 subcomplex. Contacts the 5S rRNA. Binds to the 5S rRNA independently of L5 and L18.

This is one of the proteins that binds to the 5S RNA in the ribosome where it forms part of the central protuberance. The polypeptide is Large ribosomal subunit protein bL25 (Streptomyces avermitilis (strain ATCC 31267 / DSM 46492 / JCM 5070 / NBRC 14893 / NCIMB 12804 / NRRL 8165 / MA-4680)).